A 695-amino-acid polypeptide reads, in one-letter code: Pre-mRNA-splicing factor clf-1 (695 aa).

HAT repeat units lie at residues 52-84 (EYQG…WELE), 86-118 (KEFA…AEIK), 120-152 (RNIN…VMEM), 154-185 (GDIP…LEKR), 187-218 (GEFD…FEEE), 220-259 (GTSD…YEAR), 261-295 (REYE…FEKQ), 305-337 (VILT…LEES), 339-373 (GDVD…LFLF), 383-419 (KDIG…FEIR), 421-452 (GQLT…LEQK), 454-486 (YEFE…LERG), 488-522 (DDLE…FEEE), 524-555 (GEYE…FEIN), 578-616 (EAKA…FEKT), and 621-654 (EDIE…YIFP).

It belongs to the crooked-neck family. Associated with the spliceosome.

The protein localises to the nucleus. Functionally, involved in pre-mRNA splicing and cell cycle progression. Required for the spliceosome assembly and initiation of the DNA replication. This is Pre-mRNA-splicing factor clf-1 (clf-1) from Neurospora crassa (strain ATCC 24698 / 74-OR23-1A / CBS 708.71 / DSM 1257 / FGSC 987).